A 1035-amino-acid polypeptide reads, in one-letter code: Potassium-transporting ATPase alpha chain 1 (1035 aa).

The tract at residues 1-41 (MGKAENYELYSVELGPGPGGDMAAKMSKKKKAGGGGGKRKE) is disordered. Over 1 to 98 (MGKAENYELY…NALRPPRGTP (98 aa)) the chain is Cytoplasmic. 2 positions are modified to phosphotyrosine: tyrosine 7 and tyrosine 10. Residues 26–40 (MSKKKKAGGGGGKRK) are compositionally biased toward basic residues. Serine 27 is subject to Phosphoserine. Residues 99–119 (EYVKFARQLAGGLQCLMWVAA) form a helical membrane-spanning segment. Residues 120-142 (AICLIAFAIQASEGDLTTDDNLY) lie on the Lumenal side of the membrane. A helical membrane pass occupies residues 143–163 (LAIALIAVVVVTGCFGYYQEF). The Cytoplasmic portion of the chain corresponds to 164-299 (KSTNIIASFK…NEKTPIAIEI (136 aa)). Residues 300-319 (EHFVDIIAGLAILFGATFFI) traverse the membrane as a helical segment. Topologically, residues 320–331 (VAMCIGYTFLRA) are lumenal. A helical membrane pass occupies residues 332–349 (MVFFMAIVVAYVPEGLLA). 4 residues coordinate K(+): valine 340, alanine 341, valine 343, and glutamate 345. Residues 350–783 (TVTVCLSLTA…EQGRLIFDNL (434 aa)) lie on the Cytoplasmic side of the membrane. Aspartate 387 acts as the 4-aspartylphosphate intermediate in catalysis. Residues aspartate 387 and threonine 389 each contribute to the Mg(2+) site. Phosphoserine is present on residues serine 463 and serine 601. Mg(2+) is bound by residues aspartate 728 and aspartate 732. A helical transmembrane segment spans residues 784-803 (KKSIAYTLTKNIPELTPYLI). Glutamate 797 is a K(+) binding site. At 804–813 (YITVSVPLPL) the chain is on the lumenal side. Residues 814-834 (GCITILFIELCTDIFPSVSLA) traverse the membrane as a helical segment. Residue glutamate 822 coordinates K(+). Residues 835–854 (YEKAESDIMHLRPRNPKRDR) are Cytoplasmic-facing. Serine 840 is modified (phosphoserine). The helical transmembrane segment at 855–877 (LVNEPLAAYSYFQIGAIQSFAGF) threads the bilayer. Residues 878–929 (TDYFTAMAQEGWFPLLCVGLRAQWEDHHLQDLQDSYGQEWTFGQRLYQQYTC) lie on the Lumenal side of the membrane. A helical membrane pass occupies residues 930–949 (YTVFFISIEVCQIADVLIRK). Residues 950-963 (TRRLSAFQQGFFRN) lie on the Cytoplasmic side of the membrane. At serine 954 the chain carries Phosphoserine; by PKA. The helical transmembrane segment at 964–982 (KILVIAIVFQVCIGCFLCY) threads the bilayer. Residues 983–997 (CPGMPNIFNFMPIRF) are Lumenal-facing. The helical transmembrane segment at 998–1018 (QWWLVPLPYGILIFVYDEIRK) threads the bilayer. The Cytoplasmic portion of the chain corresponds to 1019–1035 (LGVRCCPGSWWDQELYY).

This sequence belongs to the cation transport ATPase (P-type) (TC 3.A.3) family. Type IIC subfamily. In terms of assembly, the gastric H(+)/K(+) ATPase pump is composed of the catalytic alpha subunit ATP4A and the regulatory beta subunit ATP4B. Interacts (via the P-domain) with ATP4B (via N-terminus); this interaction stabilizes the lumenal-open E2 conformation state and prevents the reverse reaction of the transport cycle. As to expression, expressed in gastric parietal cells (at protein level).

It localises to the apical cell membrane. The catalysed reaction is K(+)(out) + ATP + H2O + H(+)(in) = K(+)(in) + ADP + phosphate + 2 H(+)(out). The catalytic subunit of the gastric H(+)/K(+) ATPase pump which transports H(+) ions in exchange for K(+) ions across the apical membrane of parietal cells. Uses ATP as an energy source to pump H(+) ions to the gastric lumen while transporting K(+) ion from the lumen into the cell. Remarkably generates a million-fold proton gradient across the gastric parietal cell membrane, acidifying the gastric juice down to pH 1. Within a transport cycle, the transfer of a H(+) ion across the membrane is coupled to ATP hydrolysis and is associated with a transient phosphorylation that shifts the pump conformation from inward-facing (E1) to outward-facing state (E2). The release of the H(+) ion in the stomach lumen is followed by binding of K(+) ion converting the pump conformation back to the E1 state. The chain is Potassium-transporting ATPase alpha chain 1 from Homo sapiens (Human).